Here is a 106-residue protein sequence, read N- to C-terminus: Large ribosomal subunit protein uL24 (106 aa).

The segment covering 84-97 (EKIGRELGAKEKAR) has biased composition (basic and acidic residues). The tract at residues 84–106 (EKIGRELGAKEKARLQKRKAAAK) is disordered.

Belongs to the universal ribosomal protein uL24 family. Part of the 50S ribosomal subunit.

Its function is as follows. One of two assembly initiator proteins, it binds directly to the 5'-end of the 23S rRNA, where it nucleates assembly of the 50S subunit. Functionally, one of the proteins that surrounds the polypeptide exit tunnel on the outside of the subunit. In Anaeromyxobacter sp. (strain K), this protein is Large ribosomal subunit protein uL24.